Reading from the N-terminus, the 103-residue chain is Large ribosomal subunit protein bL21 (103 aa).

This sequence belongs to the bacterial ribosomal protein bL21 family. As to quaternary structure, part of the 50S ribosomal subunit. Contacts protein L20.

Its function is as follows. This protein binds to 23S rRNA in the presence of protein L20. This chain is Large ribosomal subunit protein bL21, found in Shewanella putrefaciens (strain CN-32 / ATCC BAA-453).